Reading from the N-terminus, the 348-residue chain is Phenylalanine--tRNA ligase alpha subunit (348 aa).

E259 lines the Mg(2+) pocket.

Belongs to the class-II aminoacyl-tRNA synthetase family. Phe-tRNA synthetase alpha subunit type 1 subfamily. As to quaternary structure, tetramer of two alpha and two beta subunits. Mg(2+) serves as cofactor.

The protein resides in the cytoplasm. The catalysed reaction is tRNA(Phe) + L-phenylalanine + ATP = L-phenylalanyl-tRNA(Phe) + AMP + diphosphate + H(+). The protein is Phenylalanine--tRNA ligase alpha subunit of Lactiplantibacillus plantarum (strain ATCC BAA-793 / NCIMB 8826 / WCFS1) (Lactobacillus plantarum).